A 313-amino-acid chain; its full sequence is Probable pyridoxal 5'-phosphate synthase subunit PDX1.2 (313 aa).

Asp-42 is a D-ribose 5-phosphate binding site. The Schiff-base intermediate with D-ribose 5-phosphate role is filled by Lys-99. Gly-171 is a D-ribose 5-phosphate binding site. Position 183 (Arg-183) interacts with D-glyceraldehyde 3-phosphate. D-ribose 5-phosphate is bound by residues Gly-232 and 253 to 254 (GS).

It belongs to the PdxS/SNZ family.

It carries out the reaction aldehydo-D-ribose 5-phosphate + D-glyceraldehyde 3-phosphate + L-glutamine = pyridoxal 5'-phosphate + L-glutamate + phosphate + 3 H2O + H(+). Its pathway is cofactor biosynthesis; pyridoxal 5'-phosphate biosynthesis. In terms of biological role, catalyzes the formation of pyridoxal 5'-phosphate from ribose 5-phosphate (RBP), glyceraldehyde 3-phosphate (G3P) and ammonia. The ammonia is provided by PDX2. Can also use ribulose 5-phosphate and dihydroxyacetone phosphate as substrates, resulting from enzyme-catalyzed isomerization of RBP and G3P, respectively. Also plays an indirect role in resistance to singlet oxygen-generating photosensitizers. The sequence is that of Probable pyridoxal 5'-phosphate synthase subunit PDX1.2 (PDX12) from Oryza sativa subsp. japonica (Rice).